The chain runs to 462 residues: Glutamate--tRNA ligase 1 (462 aa).

Residues proline 8–glycine 18 carry the 'HIGH' region motif. The 'KMSKS' region signature appears at lysine 237–arginine 241. Lysine 240 is an ATP binding site.

This sequence belongs to the class-I aminoacyl-tRNA synthetase family. Glutamate--tRNA ligase type 1 subfamily. Monomer.

Its subcellular location is the cytoplasm. The catalysed reaction is tRNA(Glu) + L-glutamate + ATP = L-glutamyl-tRNA(Glu) + AMP + diphosphate. Catalyzes the attachment of glutamate to tRNA(Glu) in a two-step reaction: glutamate is first activated by ATP to form Glu-AMP and then transferred to the acceptor end of tRNA(Glu). This is Glutamate--tRNA ligase 1 from Campylobacter hominis (strain ATCC BAA-381 / DSM 21671 / CCUG 45161 / LMG 19568 / NCTC 13146 / CH001A).